The sequence spans 71 residues: Protein SlyX homolog (71 aa).

Residues 49-71 form a disordered region; the sequence is KIKESQSSSSMMSNEPEPPPPHY.

It belongs to the SlyX family.

The chain is Protein SlyX homolog from Pseudoalteromonas translucida (strain TAC 125).